The following is a 252-amino-acid chain: Osmotin-like protein (252 aa).

Residues 1–24 form the signal peptide; that stretch reads MASSSAKILLPLSLLFTLLSLSQS.

The protein localises to the secreted. It is found in the cell wall. This Solanum lycopersicum (Tomato) protein is Osmotin-like protein.